The following is a 151-amino-acid chain: Aspartate carbamoyltransferase regulatory chain (151 aa).

Zn(2+)-binding residues include C108, C113, C138, and C141.

It belongs to the PyrI family. Contains catalytic and regulatory chains. Requires Zn(2+) as cofactor.

Involved in allosteric regulation of aspartate carbamoyltransferase. The sequence is that of Aspartate carbamoyltransferase regulatory chain from Pyrobaculum islandicum (strain DSM 4184 / JCM 9189 / GEO3).